An 85-amino-acid chain; its full sequence is Antitoxin VapB43 (85 aa).

Residues 37-60 (GLNPPKPQAAGRYRVQPSGKGGLR) are disordered.

Functionally, antitoxin component of a type II toxin-antitoxin (TA) system. The chain is Antitoxin VapB43 (vapB43) from Mycobacterium tuberculosis (strain CDC 1551 / Oshkosh).